Consider the following 713-residue polypeptide: Calpastatin (713 aa).

2 disordered regions span residues 1–187 (MNPT…LDPM) and 211–506 (DKKE…PVLP). Over residues 21-30 (PNKKRHKKQA) the composition is skewed to basic residues. Residue K32 forms a Glycyl lysine isopeptide (Lys-Gly) (interchain with G-Cter in SUMO2) linkage. A compositionally biased stretch (basic and acidic residues) spans 46–63 (VVHEKKTQEVKPKEHPEP). Position 50 is an N6-acetyllysine (K50). Residues 85–94 (SRSNEQPTSE) are compositionally biased toward polar residues. S87 and S134 each carry phosphoserine. Phosphothreonine is present on T136. Residues 171–223 (TEEDNTTYTGPEVLDPMSSTYIEELGKREVTLPPKYRELLDKKEGIPVPPPDT) form an Inhibitory domain 1 repeat. The residue at position 244 (S244) is a Phosphoserine. Composition is skewed to basic and acidic residues over residues 248-258 (DGKKTEKEKST), 304-332 (RKSEPELDLSSIKEIDEAKAKEEKLKKCG), and 342-367 (YRLKPAMDKDGKPLLPEAEEKPKPLS). Residues 307–359 (EPELDLSSIKEIDEAKAKEEKLKKCGEDDETVPPEYRLKPAMDKDGKPLLPEA) form an Inhibitory domain 2 repeat. Phosphoserine is present on residues S367, S369, and S376. A compositionally biased stretch (acidic residues) spans 370–379 (ELIDELSEDF). Residues 380–397 (DQSKRKEKQSKPTEKTKE) show a composition bias toward basic and acidic residues. S441 is subject to Phosphoserine. Over residues 443-502 (GKKEADPEDGKPVEDKVKEKAKEEDREKLGEKEETIPPDYRLEEVKDKDGKTLPHKDPKE) the composition is skewed to basic and acidic residues. One copy of the Inhibitory domain 3 repeat lies at 447-500 (ADPEDGKPVEDKVKEKAKEEDREKLGEKEETIPPDYRLEEVKDKDGKTLPHKDP). A phosphoserine mark is found at S517 and S528. Positions 536–713 (SAAVSEVVSQ…KQKSDGKSTS (178 aa)) are disordered. Polar residues predominate over residues 542-553 (VVSQTSAPTTHS). Residues S575 and S577 each carry the phosphoserine modification. An Inhibitory domain 4 repeat occupies 583 to 636 (PDPDENKPIEDKVKEKAEAEHRDKLGERDDTIPPEYRHLLDKDEEGKSTKPPTK). 2 stretches are compositionally biased toward basic and acidic residues: residues 583–646 (PDPD…KPEA) and 691–713 (KAKDSTKAKEETSKQKSDGKSTS).

The protein belongs to the protease inhibitor I27 (calpastatin) family.

Its function is as follows. Specific inhibition of calpain (calcium-dependent cysteine protease). Plays a key role in postmortem tenderization of meat and have been proposed to be involved in muscle protein degradation in living tissue. This is Calpastatin (CAST) from Sus scrofa (Pig).